Reading from the N-terminus, the 336-residue chain is Phosphate acetyltransferase (336 aa).

This sequence belongs to the phosphate acetyltransferase and butyryltransferase family.

The protein localises to the cytoplasm. It catalyses the reaction acetyl-CoA + phosphate = acetyl phosphate + CoA. Its pathway is metabolic intermediate biosynthesis; acetyl-CoA biosynthesis; acetyl-CoA from acetate: step 2/2. In Treponema pallidum (strain Nichols), this protein is Phosphate acetyltransferase (pta).